Consider the following 390-residue polypeptide: Pyruvate dehydrogenase E1 component subunit alpha, somatic form, mitochondrial (390 aa).

Residues 1-29 (MRKMLAAVSRVLSGASQKPASRVLVASRN) constitute a mitochondrion transit peptide. N6-acetyllysine; alternate is present on K63. K63 bears the N6-succinyllysine; alternate mark. Pyruvate-binding residues include H92, Y118, R119, A157, G165, V167, D196, G197, A198, N225, and Y227. Thiamine diphosphate is bound by residues Y118 and R119. Positions 165, 167, 196, 197, 198, and 225 each coordinate thiamine diphosphate. Residue D196 participates in Mg(2+) binding. Residues N225 and Y227 each coordinate Mg(2+). The residue at position 232 (S232) is a Phosphoserine; by PDK1. The residue at position 244 (K244) is an N6-acetyllysine; alternate. The residue at position 244 (K244) is an N6-succinyllysine; alternate. The residue at position 277 (K277) is an N6-succinyllysine. Residue H292 participates in thiamine diphosphate binding. Residue S293 is modified to Phosphoserine; by PDK1, PDK2, PDK3 and PDK4. S295 is modified (phosphoserine). S300 is modified (phosphoserine; by PDK1, PDK2, PDK3 and PDK4). A Phosphotyrosine modification is found at Y301. Residue K313 is modified to N6-acetyllysine; alternate. At K313 the chain carries N6-succinyllysine; alternate. N6-acetyllysine occurs at positions 321 and 336. Residue K385 is modified to N6-succinyllysine.

Heterotetramer of two PDHA1 and two PDHB subunits. The heterotetramer interacts with DLAT, and is part of the multimeric pyruvate dehydrogenase complex that contains multiple copies of pyruvate dehydrogenase (E1), dihydrolipoamide acetyltransferase (DLAT, E2) and lipoamide dehydrogenase (DLD, E3). These subunits are bound to an inner core composed of about 48 DLAT and 12 PDHX molecules. Requires thiamine diphosphate as cofactor. Mg(2+) serves as cofactor. Phosphorylation at Ser-232, Ser-293 and Ser-300 by PDK family kinases inactivates the enzyme; for this phosphorylation at a single site is sufficient. Phosphorylation at Ser-293 interferes with access to active site, and thereby inactivates the enzyme. Dephosphorylation at all three sites, i.e. at Ser-232, Ser-293 and Ser-300, is required for reactivation. Post-translationally, acetylation alters the phosphorylation pattern. Deacetylated by SIRT3.

The protein localises to the mitochondrion matrix. The enzyme catalyses N(6)-[(R)-lipoyl]-L-lysyl-[protein] + pyruvate + H(+) = N(6)-[(R)-S(8)-acetyldihydrolipoyl]-L-lysyl-[protein] + CO2. With respect to regulation, pyruvate dehydrogenase activity is inhibited by phosphorylation of PDHA1; it is reactivated by dephosphorylation. The pyruvate dehydrogenase complex catalyzes the overall conversion of pyruvate to acetyl-CoA and CO(2), and thereby links the glycolytic pathway to the tricarboxylic cycle. In Pan troglodytes (Chimpanzee), this protein is Pyruvate dehydrogenase E1 component subunit alpha, somatic form, mitochondrial (PDHA1).